The primary structure comprises 124 residues: Ribonuclease pancreatic (124 aa).

Substrate contacts are provided by Lys7 and Arg10. His12 acts as the Proton acceptor in catalysis. 4 disulfides stabilise this stretch: Cys26-Cys84, Cys40-Cys95, Cys58-Cys110, and Cys65-Cys72. An N-linked (GlcNAc...) asparagine glycan is attached at Asn34. Substrate-binding positions include 41–45 (KPVNT), Lys66, and Arg85. Catalysis depends on His119, which acts as the Proton donor.

It belongs to the pancreatic ribonuclease family. In terms of assembly, monomer. Interacts with and forms tight 1:1 complexes with RNH1. Dimerization of two such complexes may occur. Interaction with RNH1 inhibits this protein. In terms of tissue distribution, pancreas.

The protein resides in the secreted. It carries out the reaction an [RNA] containing cytidine + H2O = an [RNA]-3'-cytidine-3'-phosphate + a 5'-hydroxy-ribonucleotide-3'-[RNA].. The enzyme catalyses an [RNA] containing uridine + H2O = an [RNA]-3'-uridine-3'-phosphate + a 5'-hydroxy-ribonucleotide-3'-[RNA].. Endonuclease that catalyzes the cleavage of RNA on the 3' side of pyrimidine nucleotides. Acts on single-stranded and double-stranded RNA. This is Ribonuclease pancreatic (RNASE1) from Mesocricetus auratus (Golden hamster).